The primary structure comprises 545 residues: CTP synthase (545 aa).

Positions 1 to 266 (MTTNYIFVTG…DDYICKRFSL (266 aa)) are amidoligase domain. CTP is bound at residue Ser-14. Position 14 (Ser-14) interacts with UTP. Residues 15–20 (SLGKGI) and Asp-72 each bind ATP. Mg(2+)-binding residues include Asp-72 and Glu-140. CTP is bound by residues 147–149 (DIE), 187–192 (KTKPTQ), and Lys-223. UTP contacts are provided by residues 187 to 192 (KTKPTQ) and Lys-223. 239-241 (KDV) is an ATP binding site. The Glutamine amidotransferase type-1 domain maps to 291-542 (TIGMVGKYIE…VKAASEYQKR (252 aa)). Gly-352 is a binding site for L-glutamine. Catalysis depends on Cys-379, which acts as the Nucleophile; for glutamine hydrolysis. L-glutamine is bound by residues 380 to 383 (LGMQ), Glu-403, and Arg-470. Active-site residues include His-515 and Glu-517.

This sequence belongs to the CTP synthase family. Homotetramer.

It catalyses the reaction UTP + L-glutamine + ATP + H2O = CTP + L-glutamate + ADP + phosphate + 2 H(+). The catalysed reaction is L-glutamine + H2O = L-glutamate + NH4(+). The enzyme catalyses UTP + NH4(+) + ATP = CTP + ADP + phosphate + 2 H(+). It participates in pyrimidine metabolism; CTP biosynthesis via de novo pathway; CTP from UDP: step 2/2. With respect to regulation, allosterically activated by GTP, when glutamine is the substrate; GTP has no effect on the reaction when ammonia is the substrate. The allosteric effector GTP functions by stabilizing the protein conformation that binds the tetrahedral intermediate(s) formed during glutamine hydrolysis. Inhibited by the product CTP, via allosteric rather than competitive inhibition. Functionally, catalyzes the ATP-dependent amination of UTP to CTP with either L-glutamine or ammonia as the source of nitrogen. Regulates intracellular CTP levels through interactions with the four ribonucleotide triphosphates. This is CTP synthase from Klebsiella pneumoniae subsp. pneumoniae (strain ATCC 700721 / MGH 78578).